A 96-amino-acid chain; its full sequence is MQALIQISDKQYLVKTGDKLFIPHQNAEVGNVIDLKPLAQIDQEKTSIEPSGNVQLKVLEHLKDEKVIVFKKKRRKRYQKRNGHRQLMTQVEVLSM.

The protein belongs to the bacterial ribosomal protein bL21 family. As to quaternary structure, part of the 50S ribosomal subunit. Contacts protein L20.

Functionally, this protein binds to 23S rRNA in the presence of protein L20. In Chlorobium phaeobacteroides (strain BS1), this protein is Large ribosomal subunit protein bL21.